Reading from the N-terminus, the 202-residue chain is Putative scarecrow-like protein 16 (202 aa).

Positions 1-26 are VHIID; the sequence is MQIPTLIDSMANKLHKKPPPLLKLTV. The 202-residue stretch at 1-202 folds into the GRAS domain; the sequence is MQIPTLIDSM…RVERLEPKSR (202 aa). The tract at residues 45-82 is leucine repeat II (LRII); that stretch reads ELGSKLVNFATTRNVAMEFRIISSSYSDGLSSLIEQLR. The segment at 92–184 is PFYRE; that stretch reads LVVNCHMMLH…EADISWKIDN (93 aa). An SAW region spans residues 187–202; that stretch reads AKEGAERVERLEPKSR.

It belongs to the GRAS family. Expressed in seedlings, leaves and flowers.

It localises to the nucleus. Functionally, probable transcription factor involved in plant development. This Arabidopsis thaliana (Mouse-ear cress) protein is Putative scarecrow-like protein 16 (SCL16).